The following is a 496-amino-acid chain: Glycerol kinase (496 aa).

Threonine 11 is an ADP binding site. ATP is bound by residues threonine 11, threonine 12, and serine 13. Threonine 11 provides a ligand contact to sn-glycerol 3-phosphate. Arginine 15 lines the ADP pocket. 4 residues coordinate sn-glycerol 3-phosphate: arginine 81, glutamate 82, tyrosine 133, and aspartate 242. Residues arginine 81, glutamate 82, tyrosine 133, aspartate 242, and glutamine 243 each contribute to the glycerol site. The ADP site is built by threonine 264 and glycine 307. The ATP site is built by threonine 264, glycine 307, glutamine 311, and glycine 408. Positions 408 and 412 each coordinate ADP.

The protein belongs to the FGGY kinase family.

The catalysed reaction is glycerol + ATP = sn-glycerol 3-phosphate + ADP + H(+). Its pathway is polyol metabolism; glycerol degradation via glycerol kinase pathway; sn-glycerol 3-phosphate from glycerol: step 1/1. Its activity is regulated as follows. Inhibited by fructose 1,6-bisphosphate (FBP). Key enzyme in the regulation of glycerol uptake and metabolism. Catalyzes the phosphorylation of glycerol to yield sn-glycerol 3-phosphate. In Trichlorobacter lovleyi (strain ATCC BAA-1151 / DSM 17278 / SZ) (Geobacter lovleyi), this protein is Glycerol kinase.